The sequence spans 199 residues: Holliday junction branch migration complex subunit RuvA (199 aa).

A domain I region spans residues 1–63 (MYEYLTGLVT…EDNISLFGFT (63 aa)). Residues 64–142 (DQNEKNLFMQ…NESSSSLFAT (79 aa)) are domain II. A flexible linker region spans residues 143–149 (TQLTVDA). The interval 150–199 (TVNRELKDALEALAALGYKERDIKKVQKALMKEEQMATDEYLRQALRLLN) is domain III.

Belongs to the RuvA family. Homotetramer. Forms an RuvA(8)-RuvB(12)-Holliday junction (HJ) complex. HJ DNA is sandwiched between 2 RuvA tetramers; dsDNA enters through RuvA and exits via RuvB. An RuvB hexamer assembles on each DNA strand where it exits the tetramer. Each RuvB hexamer is contacted by two RuvA subunits (via domain III) on 2 adjacent RuvB subunits; this complex drives branch migration. In the full resolvosome a probable DNA-RuvA(4)-RuvB(12)-RuvC(2) complex forms which resolves the HJ.

The protein localises to the cytoplasm. In terms of biological role, the RuvA-RuvB-RuvC complex processes Holliday junction (HJ) DNA during genetic recombination and DNA repair, while the RuvA-RuvB complex plays an important role in the rescue of blocked DNA replication forks via replication fork reversal (RFR). RuvA specifically binds to HJ cruciform DNA, conferring on it an open structure. The RuvB hexamer acts as an ATP-dependent pump, pulling dsDNA into and through the RuvAB complex. HJ branch migration allows RuvC to scan DNA until it finds its consensus sequence, where it cleaves and resolves the cruciform DNA. The chain is Holliday junction branch migration complex subunit RuvA from Limosilactobacillus reuteri subsp. reuteri (strain JCM 1112) (Lactobacillus reuteri).